Consider the following 147-residue polypeptide: uncharacterized protein (147 aa).

Residues 1 to 37 are disordered; the sequence is MVALFKSSLGRPEQHQTPQIRISPASSNVEHSEKQPR. The segment covering 15 to 29 has biased composition (polar residues); it reads HQTPQIRISPASSNV. Positions 71-147 constitute a Cytochrome b5 heme-binding domain; sequence PIPVTKEELA…LKTSFVGFLV (77 aa). Heme is bound by residues histidine 106 and histidine 129.

The protein belongs to the cytochrome b5 family.

This is an uncharacterized protein from Schizosaccharomyces pombe (strain 972 / ATCC 24843) (Fission yeast).